The chain runs to 311 residues: Ribosomal RNA small subunit methyltransferase H (311 aa).

S-adenosyl-L-methionine is bound by residues 39-41 (GGH), Asp59, Phe81, Asp102, and His109.

This sequence belongs to the methyltransferase superfamily. RsmH family.

It localises to the cytoplasm. The catalysed reaction is cytidine(1402) in 16S rRNA + S-adenosyl-L-methionine = N(4)-methylcytidine(1402) in 16S rRNA + S-adenosyl-L-homocysteine + H(+). Functionally, specifically methylates the N4 position of cytidine in position 1402 (C1402) of 16S rRNA. This Porphyromonas gingivalis (strain ATCC BAA-308 / W83) protein is Ribosomal RNA small subunit methyltransferase H.